Here is a 670-residue protein sequence, read N- to C-terminus: Solute carrier organic anion transporter family member 1A6 (670 aa).

Residues 1-20 lie on the Cytoplasmic side of the membrane; it reads MGEPGKRVGIHRVRCFAKIK. A helical membrane pass occupies residues 21–40; that stretch reads VFLLALIWAYISKILSGVYM. Topologically, residues 41-59 are extracellular; sequence STMLTQLERQFNISTSIVG. Residue N52 is glycosylated (N-linked (GlcNAc...) asparagine). The chain crosses the membrane as a helical span at residues 60-80; that stretch reads LINGSFEMGNLLVIVFVSYFG. Residues 81 to 86 are Cytoplasmic-facing; sequence TKLHRP. Residues 87–111 traverse the membrane as a helical segment; that stretch reads IMIGVGCAVMGLGCFIISLPHFLMG. Residues 112–155 are Extracellular-facing; that stretch reads RYEYETTISPTSNLSSNSFLCVENRSQTLKPTQDPAECVKEIKS. Residues N124 and N135 are each glycosylated (N-linked (GlcNAc...) asparagine). A helical transmembrane segment spans residues 156–184; it reads LMWIYVLVGNIIRGIGETPIMPLGISYIE. The Cytoplasmic portion of the chain corresponds to 185–203; it reads DFAKSENSPLYIGILEVGK. Residues 204–224 form a helical membrane-spanning segment; that stretch reads MIGPILGYLMGPFCANIYVDT. At 225 to 242 the chain is on the extracellular side; sequence GSVNTDDLTITPTDTRWV. A helical transmembrane segment spans residues 243–267; the sequence is GAWWIGFLVCAGVNVLTSIPFFFFP. The Cytoplasmic portion of the chain corresponds to 268 to 311; the sequence is KTLPKEGLQDNGDGTENAKEEKHRDKAKEENQGIIKEFFLMMKN. Residues 312-333 traverse the membrane as a helical segment; the sequence is LFCNPIYMLCVLTSVLQVNGVA. Topologically, residues 334 to 353 are extracellular; sequence NIVIYKPKYLEHHFGISTAK. A helical transmembrane segment spans residues 354 to 377; sequence AVFLIGLYTTPSVSAGYLISGFIM. Topologically, residues 378–381 are cytoplasmic; sequence KKLK. Residues 382–405 form a helical membrane-spanning segment; it reads ITLKKAAIIALCLFMSECLLSLCN. Over 406-513 the chain is Extracellular; that stretch reads FMLTCDTTPI…PDCANKLQYF (108 aa). The Kazal-like domain maps to 433–488; that stretch reads NKFLSDCNTRCNCLTKTWDPVCGNNGLAYMSPCLAGCEKSVGTGANMVFQNCSCIR. 3 disulfide bridges follow: C439/C469, C445/C465, and C454/C486. Residues N483 and N492 are each glycosylated (N-linked (GlcNAc...) asparagine). The helical transmembrane segment at 514-536 threads the bilayer; the sequence is LIITVFCCFFYSLATIPGYMVFL. Topologically, residues 537–545 are cytoplasmic; it reads RCMKSEEKS. A helical transmembrane segment spans residues 546–571; that stretch reads LGIGLQAFFMRLFAGIPAPIYFGALI. Over 572 to 605 the chain is Extracellular; it reads DRTCLHWGTLKCGEPGACRTYEVSSFRRLYLGLP. A helical transmembrane segment spans residues 606–623; the sequence is AALRGSIILPSFFILRLI. The Cytoplasmic segment spans residues 624–670; it reads RKLQIPGDTDSSEIELAETKPTEKESECTDMHKSSKVENDGELKTKL. A Phosphothreonine modification is found at T632. The tract at residues 633–670 is disordered; it reads DSSEIELAETKPTEKESECTDMHKSSKVENDGELKTKL. S634 and S635 each carry phosphoserine. Residues 640–670 are compositionally biased toward basic and acidic residues; the sequence is AETKPTEKESECTDMHKSSKVENDGELKTKL.

Belongs to the organo anion transporter (TC 2.A.60) family. In terms of tissue distribution, kidney specific.

The protein resides in the cell membrane. In terms of biological role, may mediate the Na(+)-independent transport of organic anions. In Mus musculus (Mouse), this protein is Solute carrier organic anion transporter family member 1A6 (Slco1a6).